The sequence spans 476 residues: tRNA(Ile)-lysidine synthase (476 aa).

25–30 provides a ligand contact to ATP; it reads SGGPDS.

It belongs to the tRNA(Ile)-lysidine synthase family.

The protein localises to the cytoplasm. It catalyses the reaction cytidine(34) in tRNA(Ile2) + L-lysine + ATP = lysidine(34) in tRNA(Ile2) + AMP + diphosphate + H(+). Functionally, ligates lysine onto the cytidine present at position 34 of the AUA codon-specific tRNA(Ile) that contains the anticodon CAU, in an ATP-dependent manner. Cytidine is converted to lysidine, thus changing the amino acid specificity of the tRNA from methionine to isoleucine. This is tRNA(Ile)-lysidine synthase from Bacillus licheniformis (strain ATCC 14580 / DSM 13 / JCM 2505 / CCUG 7422 / NBRC 12200 / NCIMB 9375 / NCTC 10341 / NRRL NRS-1264 / Gibson 46).